Here is a 328-residue protein sequence, read N- to C-terminus: Peroxisomal adenine nucleotide transporter 1 (328 aa).

6 helical membrane passes run 1–21 (MLTL…NIAV), 78–98 (TVTT…YTFI), 128–148 (LVLG…MAVV), 185–202 (LRTG…YASF), 226–246 (FILG…LIVA), and 277–297 (WKGV…LFAF). Solcar repeat units follow at residues 1–101 (MLTL…IRKS), 122–208 (PSTI…LKEV), and 220–304 (LSAV…LTKS).

Belongs to the mitochondrial carrier (TC 2.A.29) family.

The protein localises to the peroxisome membrane. In terms of biological role, adenine nucleotide transporter involved in the uniport of ATP and adenine nucleotide hetero-exchange transport between the cytosol and the peroxisomal lumen. This transport is accompanied by a proton transport from the peroxisomal lumen to the cytosol. Transport of ATP into the peroxisome is required for beta-oxidation of medium-chain fatty acids. Required for growth on medium-chain fatty acids, pH gradient formation in peroxisomes and for normal peroxisome proliferation. The sequence is that of Peroxisomal adenine nucleotide transporter 1 (ANT1) from Saccharomyces cerevisiae (strain ATCC 204508 / S288c) (Baker's yeast).